We begin with the raw amino-acid sequence, 149 residues long: MDVLLLNGPNLNLLGSREPDYYGTQTLDDITSNLTKIANNVGLTFEHHQDNSEAKLIKYIHNAVDNGVQYIIINPAAFTHTSIALRDAILAVGIEFSEVHLSNIYKRENFRKQSYFSDIAQGIISGFGPQGYEFALQAAIQHIQQLERL.

The active-site Proton acceptor is the tyrosine 22. Substrate-binding residues include asparagine 74, histidine 80, and aspartate 87. Catalysis depends on histidine 100, which acts as the Proton donor. Substrate is bound by residues 101–102 and arginine 111; that span reads LS.

This sequence belongs to the type-II 3-dehydroquinase family. As to quaternary structure, homododecamer.

It carries out the reaction 3-dehydroquinate = 3-dehydroshikimate + H2O. Its pathway is metabolic intermediate biosynthesis; chorismate biosynthesis; chorismate from D-erythrose 4-phosphate and phosphoenolpyruvate: step 3/7. Its function is as follows. Catalyzes a trans-dehydration via an enolate intermediate. The protein is 3-dehydroquinate dehydratase of Vesicomyosocius okutanii subsp. Calyptogena okutanii (strain HA).